A 277-amino-acid chain; its full sequence is Phosphatidylglycerol--prolipoprotein diacylglyceryl transferase (277 aa).

A run of 4 helical transmembrane segments spans residues 15–35 (IHVRWYGIIIACGILLATFMS), 50–70 (IDLLLWGVPIGFIGARIYYVI), 89–109 (GGIAIYGGLIAGAIVLLVFCY), and 112–132 (FLPPFLVLDIVAPGVMAAQVL). Arg-134 provides a ligand contact to a 1,2-diacyl-sn-glycero-3-phospho-(1'-sn-glycerol). Transmembrane regions (helical) follow at residues 174 to 194 (KPTFLYESFFNLIGLIIILSL), 204 to 224 (GEVFMLYLAWYSVVRFFVEGM), and 234 to 254 (VIRVSQALSLLLLIAVVILFV).

This sequence belongs to the Lgt family.

It is found in the cell membrane. It catalyses the reaction L-cysteinyl-[prolipoprotein] + a 1,2-diacyl-sn-glycero-3-phospho-(1'-sn-glycerol) = an S-1,2-diacyl-sn-glyceryl-L-cysteinyl-[prolipoprotein] + sn-glycerol 1-phosphate + H(+). The protein operates within protein modification; lipoprotein biosynthesis (diacylglyceryl transfer). Functionally, catalyzes the transfer of the diacylglyceryl group from phosphatidylglycerol to the sulfhydryl group of the N-terminal cysteine of a prolipoprotein, the first step in the formation of mature lipoproteins. The protein is Phosphatidylglycerol--prolipoprotein diacylglyceryl transferase of Lactobacillus delbrueckii subsp. bulgaricus (strain ATCC 11842 / DSM 20081 / BCRC 10696 / JCM 1002 / NBRC 13953 / NCIMB 11778 / NCTC 12712 / WDCM 00102 / Lb 14).